Reading from the N-terminus, the 121-residue chain is MANLQSKSSSAKRKRRHFRVRAKINGTTSVPRLNVFKSNGHFYAQLIDDVKQKTIVAASTLKMTGLKSTSNIAAAEKVGDEIAKKALDKKVTTVVFDRGGYLYHGKVKAFAEAARKAGLKF.

It belongs to the universal ribosomal protein uL18 family. Part of the 50S ribosomal subunit; part of the 5S rRNA/L5/L18/L25 subcomplex. Contacts the 5S and 23S rRNAs.

Its function is as follows. This is one of the proteins that bind and probably mediate the attachment of the 5S RNA into the large ribosomal subunit, where it forms part of the central protuberance. This chain is Large ribosomal subunit protein uL18, found in Spiroplasma kunkelii.